A 381-amino-acid polypeptide reads, in one-letter code: Probable glucuronosyltransferase Os04g0103100 (381 aa).

The Cytoplasmic portion of the chain corresponds to 1–69 (MASIRRPHSP…HTSFRRPLPR (69 aa)). Residues 21–50 (HLGPFASSSPPSSPLRHSSSSSSPRSAAHH) are disordered. The segment covering 26–46 (ASSSPPSSPLRHSSSSSSPRS) has biased composition (low complexity). The helical; Signal-anchor for type II membrane protein transmembrane segment at 70 to 90 (FAAFFLLGSFLGLLHFLSHLP) threads the bilayer. Residues 91-381 (RPLGPIPNPN…TDLDVIIPLK (291 aa)) are Lumenal-facing. The tract at residues 96–122 (IPNPNSHHRHRDPFPILQHPHPPSTPH) is disordered. N-linked (GlcNAc...) asparagine glycans are attached at residues Asn-194 and Asn-296.

It belongs to the glycosyltransferase 43 family.

It localises to the golgi apparatus membrane. Functionally, involved in the synthesis of glucuronoxylan hemicellulose in secondary cell walls. This Oryza sativa subsp. japonica (Rice) protein is Probable glucuronosyltransferase Os04g0103100.